The following is a 533-amino-acid chain: Dipeptide-binding protein (533 aa).

Residues 1–24 (MRKILPLRAWLAAGLILGSPFSHA) form the signal peptide.

The protein belongs to the bacterial solute-binding protein 5 family.

It is found in the periplasm. Its function is as follows. Binds different dipeptides. Probably bind only L-amino acid containing dipeptides. The polypeptide is Dipeptide-binding protein (Pseudomonas aeruginosa (strain ATCC 15692 / DSM 22644 / CIP 104116 / JCM 14847 / LMG 12228 / 1C / PRS 101 / PAO1)).